Reading from the N-terminus, the 257-residue chain is Trans-aconitate 2-methyltransferase (257 aa).

The protein belongs to the methyltransferase superfamily. Tam family.

The protein localises to the cytoplasm. It catalyses the reaction trans-aconitate + S-adenosyl-L-methionine = (E)-3-(methoxycarbonyl)pent-2-enedioate + S-adenosyl-L-homocysteine. Catalyzes the S-adenosylmethionine monomethyl esterification of trans-aconitate. The sequence is that of Trans-aconitate 2-methyltransferase from Sinorhizobium fredii (strain NBRC 101917 / NGR234).